The chain runs to 90 residues: DNA-binding protein HU-1 (90 aa).

At Thr4 the chain carries Phosphothreonine. The segment at 55–90 (RSARKGRNPQTGEEIEIPATKNPAFKPGKQLKDAVN) is disordered.

It belongs to the bacterial histone-like protein family. As to quaternary structure, homodimer.

Histone-like DNA-binding protein which is capable of wrapping DNA to stabilize it, and thus to prevent its denaturation under extreme environmental conditions. The sequence is that of DNA-binding protein HU-1 (hup1) from Halalkalibacterium halodurans (strain ATCC BAA-125 / DSM 18197 / FERM 7344 / JCM 9153 / C-125) (Bacillus halodurans).